A 442-amino-acid polypeptide reads, in one-letter code: 3-phosphoshikimate 1-carboxyvinyltransferase (442 aa).

3 residues coordinate 3-phosphoshikimate: Lys25, Ser26, and Arg30. Lys25 is a binding site for phosphoenolpyruvate. Positions 97 and 125 each coordinate phosphoenolpyruvate. 3-phosphoshikimate-binding residues include Ser170, Gln172, Asp323, and Lys350. Gln172 contacts phosphoenolpyruvate. The active-site Proton acceptor is Asp323. Residues Arg354 and Arg399 each coordinate phosphoenolpyruvate.

It belongs to the EPSP synthase family. As to quaternary structure, monomer.

The protein localises to the cytoplasm. The catalysed reaction is 3-phosphoshikimate + phosphoenolpyruvate = 5-O-(1-carboxyvinyl)-3-phosphoshikimate + phosphate. It functions in the pathway metabolic intermediate biosynthesis; chorismate biosynthesis; chorismate from D-erythrose 4-phosphate and phosphoenolpyruvate: step 6/7. Catalyzes the transfer of the enolpyruvyl moiety of phosphoenolpyruvate (PEP) to the 5-hydroxyl of shikimate-3-phosphate (S3P) to produce enolpyruvyl shikimate-3-phosphate and inorganic phosphate. The sequence is that of 3-phosphoshikimate 1-carboxyvinyltransferase from Bartonella quintana (strain Toulouse) (Rochalimaea quintana).